The following is a 209-amino-acid chain: Ribosomal RNA large subunit methyltransferase E (209 aa).

Residues G63, W65, D83, D99, and D124 each coordinate S-adenosyl-L-methionine. Residue K164 is the Proton acceptor of the active site.

Belongs to the class I-like SAM-binding methyltransferase superfamily. RNA methyltransferase RlmE family.

It localises to the cytoplasm. The catalysed reaction is uridine(2552) in 23S rRNA + S-adenosyl-L-methionine = 2'-O-methyluridine(2552) in 23S rRNA + S-adenosyl-L-homocysteine + H(+). Specifically methylates the uridine in position 2552 of 23S rRNA at the 2'-O position of the ribose in the fully assembled 50S ribosomal subunit. This Aliivibrio fischeri (strain MJ11) (Vibrio fischeri) protein is Ribosomal RNA large subunit methyltransferase E.